A 193-amino-acid polypeptide reads, in one-letter code: MKCSQCNKKLCYTGKDCKKDITQKIIEEYKKEENLKIAEVSAYIEATYYMKKTRLEEIIEFCKLMEYKKIGIAFCIGLENEAKILAKILSKHFEVYSVCCKVCGIDKDVFKFKKINKGEKEAMCNPIGQAEILNEIGTDLNIIVGLCIGHDILFQKYSKAPTTTFIVKDRVLSHNTAGAIYTKYYLKKLLEGK.

This is an uncharacterized protein from Methanocaldococcus jannaschii (strain ATCC 43067 / DSM 2661 / JAL-1 / JCM 10045 / NBRC 100440) (Methanococcus jannaschii).